The following is a 252-amino-acid chain: Trans-aconitate 2-methyltransferase (252 aa).

This sequence belongs to the methyltransferase superfamily. Tam family.

Its subcellular location is the cytoplasm. It carries out the reaction trans-aconitate + S-adenosyl-L-methionine = (E)-3-(methoxycarbonyl)pent-2-enedioate + S-adenosyl-L-homocysteine. In terms of biological role, catalyzes the S-adenosylmethionine monomethyl esterification of trans-aconitate. This chain is Trans-aconitate 2-methyltransferase, found in Escherichia coli O139:H28 (strain E24377A / ETEC).